The sequence spans 1087 residues: Platelet-derived growth factor receptor alpha (1087 aa).

The first 24 residues, 1 to 24, serve as a signal peptide directing secretion; the sequence is MMPAMRASLILGCLLIIGPWAILA. The Extracellular portion of the chain corresponds to 25 to 530; sequence ENPLPTIFPD…PTLRSELTVA (506 aa). 2 Ig-like C2-type domains span residues 27-114 and 118-211; these read PLPT…SEIE and IYIY…LQTW. Cys50 and Cys101 are disulfide-bonded. N-linked (GlcNAc...) asparagine glycosylation is found at Asn77 and Asn104. Cys151 and Cys192 are joined by a disulfide. Residues Asn216, Asn282, Asn309, Asn356, Asn362, Asn461, and Asn471 are each glycosylated (N-linked (GlcNAc...) asparagine). Ig-like C2-type domains are found at residues 217–309, 315–409, and 417–519; these read ISVE…KKTN, KGFI…KSYS, and PALI…LKLV. Cys238 and Cys293 are disulfide-bonded. The cysteines at positions 438 and 503 are disulfide-linked. The helical transmembrane segment at 531–551 threads the bilayer; sequence AAVLVLLVIVIISLIVLVIIW. Over 552-1087 the chain is Cytoplasmic; it reads KQKPRYEIRW…SSDLVEDSFL (536 aa). 2 positions are modified to phosphotyrosine; by autocatalysis: Tyr574 and Tyr576. The Protein kinase domain maps to 595-970; sequence LVLGRILGSG…CYETVLHDFL (376 aa). ATP contacts are provided by residues 601 to 609 and Lys629; that span reads LGSGAFGKV. Residues Tyr722, Tyr733, Tyr744, Tyr756, and Tyr764 each carry the phosphotyrosine; by autocatalysis modification. Residue Asp818 is the Proton acceptor of the active site. A phosphotyrosine; by autocatalysis mark is found at Tyr849, Tyr988, and Tyr1017. The disordered stretch occupies residues 1017 to 1064; it reads YIIPLPDIDPVSEDESGKRNRHSSQTSEESAIETGSSSSTFIKRDDET. Over residues 1039–1057 the composition is skewed to polar residues; it reads SSQTSEESAIETGSSSSTF.

Belongs to the protein kinase superfamily. Tyr protein kinase family. CSF-1/PDGF receptor subfamily. Interacts with homodimeric pdgfa, pdgfb and pdgfc, and with heterodimers formed by pdgfa and pdgfb. Monomer in the absence of bound ligand. Interaction with dimeric pdgfa, pdgfb and/or pdgfc leads to receptor dimerization, where both pdgfra homodimers and heterodimers with pdgfrb are observed. Ubiquitinated, leading to its internalization and degradation. In terms of processing, autophosphorylated on tyrosine residues upon ligand binding. Autophosphorylation occurs in trans, i.e. one subunit of the dimeric receptor phosphorylates tyrosine residues on the other subunit.

The protein resides in the cell membrane. Its subcellular location is the cell projection. The protein localises to the cilium. It is found in the golgi apparatus. The enzyme catalyses L-tyrosyl-[protein] + ATP = O-phospho-L-tyrosyl-[protein] + ADP + H(+). With respect to regulation, present in an inactive conformation in the absence of bound ligand. Binding of pdgfa and/or pdgfb leads to dimerization and activation by autophosphorylation on tyrosine residues. Its function is as follows. Tyrosine-protein kinase that acts as a cell-surface receptor for pdgfa, pdgfb and pdgfc and plays an essential role in the regulation of embryonic development, cell proliferation, survival and chemotaxis. Depending on the context, promotes or inhibits cell proliferation and cell migration. Plays an important role in the differentiation of bone marrow-derived mesenchymal stem cells. Required for normal skeleton development. Required for normal development of the gastrointestinal tract. Plays a role in cell migration and chemotaxis in wound healing. Plays a role in platelet activation, secretion of agonists from platelet granules, and in thrombin-induced platelet aggregation. Binding of its cognate ligands - homodimeric pdgfa, homodimeric pdgfb, heterodimers formed by pdgfa and pdgfb or homodimeric pdgfc -leads to the activation of several signaling cascades; the response depends on the nature of the bound ligand and is modulated by the formation of heterodimers between pdgfra and pdgfrb. Phosphorylates pik3r1, plcg1, and ptpn11. Activation of plcg1 leads to the production of the cellular signaling molecules diacylglycerol and inositol 1,4,5-trisphosphate, mobilization of cytosolic Ca(2+) and the activation of protein kinase C. Phosphorylates pik3r1, the regulatory subunit of phosphatidylinositol 3-kinase, and thereby mediates activation of the akt1 signaling pathway. Mediates activation of hras and of the MAP kinases mapk1/erk2 and/or mapk3/erk1. Promotes activation of stat family members stat1, stat3 and stat5a and/or stat5b. Receptor signaling is down-regulated by protein phosphatases that dephosphorylate the receptor and its down-stream effectors, and by rapid internalization of the activated receptor. This chain is Platelet-derived growth factor receptor alpha (pdgfra), found in Xenopus laevis (African clawed frog).